The chain runs to 131 residues: Small ribosomal subunit protein uS11 (131 aa).

The protein belongs to the universal ribosomal protein uS11 family. Part of the 30S ribosomal subunit. Interacts with proteins S7 and S18. Binds to IF-3.

Functionally, located on the platform of the 30S subunit, it bridges several disparate RNA helices of the 16S rRNA. Forms part of the Shine-Dalgarno cleft in the 70S ribosome. The polypeptide is Small ribosomal subunit protein uS11 (Granulibacter bethesdensis (strain ATCC BAA-1260 / CGDNIH1)).